The chain runs to 203 residues: tRNA (cytidine(56)-2'-O)-methyltransferase (203 aa).

Residues leucine 80, 109–113 (GAEKV), and 127–134 (IGNQPHSE) each bind S-adenosyl-L-methionine. The interval 178 to 203 (AEQDKAEGKATPGKNWENSGFTGDNP) is disordered. The span at 193–203 (WENSGFTGDNP) shows a compositional bias: polar residues.

Belongs to the aTrm56 family. In terms of assembly, homodimer.

It is found in the cytoplasm. The catalysed reaction is cytidine(56) in tRNA + S-adenosyl-L-methionine = 2'-O-methylcytidine(56) in tRNA + S-adenosyl-L-homocysteine + H(+). Specifically catalyzes the AdoMet-dependent 2'-O-ribose methylation of cytidine at position 56 in tRNAs. The protein is tRNA (cytidine(56)-2'-O)-methyltransferase of Pyrococcus horikoshii (strain ATCC 700860 / DSM 12428 / JCM 9974 / NBRC 100139 / OT-3).